A 290-amino-acid chain; its full sequence is Diaminopimelate epimerase (290 aa).

Substrate contacts are provided by asparagine 17, glutamine 49, and asparagine 69. Residue cysteine 78 is the Proton donor of the active site. Residues glycine 79–asparagine 80, asparagine 166, asparagine 199, and glutamate 217–arginine 218 each bind substrate. Cysteine 226 functions as the Proton acceptor in the catalytic mechanism. Substrate is bound at residue glycine 227–serine 228.

The protein belongs to the diaminopimelate epimerase family. In terms of assembly, homodimer.

Its subcellular location is the cytoplasm. The enzyme catalyses (2S,6S)-2,6-diaminopimelate = meso-2,6-diaminopimelate. Its pathway is amino-acid biosynthesis; L-lysine biosynthesis via DAP pathway; DL-2,6-diaminopimelate from LL-2,6-diaminopimelate: step 1/1. Functionally, catalyzes the stereoinversion of LL-2,6-diaminopimelate (L,L-DAP) to meso-diaminopimelate (meso-DAP), a precursor of L-lysine and an essential component of the bacterial peptidoglycan. This is Diaminopimelate epimerase from Afipia carboxidovorans (strain ATCC 49405 / DSM 1227 / KCTC 32145 / OM5) (Oligotropha carboxidovorans).